Consider the following 43-residue polypeptide: METATLVAIFISGSLVSFTGYALYTAFGQPSQQLRDPFEEHGD.

The helical transmembrane segment at 5–27 (TLVAIFISGSLVSFTGYALYTAF) threads the bilayer.

The protein belongs to the PsbN family.

The protein localises to the plastid. It localises to the chloroplast thylakoid membrane. Functionally, may play a role in photosystem I and II biogenesis. The chain is Protein PsbN from Nelumbo lutea (American lotus).